A 61-amino-acid polypeptide reads, in one-letter code: Truncated Cytokine response-modifying protein B (61 aa).

Functionally, the protein is truncated in this strain and presumably inactive. It has similarities with variola virus CrmB, but the product is inactivated due to several premature stop codon. The polypeptide is Truncated Cytokine response-modifying protein B (Bos taurus (Bovine)).